Reading from the N-terminus, the 99-residue chain is Cobalt transport protein CbiN (99 aa).

The next 2 membrane-spanning stretches (helical) occupy residues 6-26 (VLMIIGIIILTIAPLVMYSGL) and 68-88 (SLLFALQAAIGAIIIGYFFGY).

It belongs to the CbiN family. As to quaternary structure, forms an energy-coupling factor (ECF) transporter complex composed of an ATP-binding protein (A component, CbiO), a transmembrane protein (T component, CbiQ) and 2 possible substrate-capture proteins (S components, CbiM and CbiN) of unknown stoichimetry.

It localises to the cell membrane. It participates in cofactor biosynthesis; adenosylcobalamin biosynthesis. Part of the energy-coupling factor (ECF) transporter complex CbiMNOQ involved in cobalt import. This Methanococcus vannielii (strain ATCC 35089 / DSM 1224 / JCM 13029 / OCM 148 / SB) protein is Cobalt transport protein CbiN.